We begin with the raw amino-acid sequence, 429 residues long: MSFYRSWIGGTGDLVKKYTSSIKDDVELAEEVVRVMKGHVAHLVEIGSIPKEAGERIIKALEEVDASELLKEEFEDVHEALEKWLIDKLGEEIGGWVGLGRSRNDHVAAAIRLAALRKTERLKEEACRLRCALAKRALEYADCPMPSFTHFQPAQVITFGHYLLAIDELLAEFLHILRGVEDLLNRSPLGAGPAGGVRTPLDRRRLAELVGFKEVVENALYASGSRFFALALASAVVSFLAELSRAVDDFIRWNSPVVGYVNSPDSHVSTSSIMPHKRNLVTLEVLRARIAEALGHFAAMSALVMKVGMGYSLDLQEATRHLWAVLNIATEGMAVFRDFIENMAFNCEKSRKDAEAYFTTSSDTAEDEALKGVPFRKAYFQLASAIKAGTARLLTINEALKRPVYGSANTEEVKRAASRRLALCRPKPL.

The protein belongs to the lyase 1 family. Argininosuccinate lyase subfamily.

The protein localises to the cytoplasm. The catalysed reaction is 2-(N(omega)-L-arginino)succinate = fumarate + L-arginine. The protein operates within amino-acid biosynthesis; L-arginine biosynthesis; L-arginine from L-ornithine and carbamoyl phosphate: step 3/3. This chain is Argininosuccinate lyase, found in Pyrobaculum aerophilum (strain ATCC 51768 / DSM 7523 / JCM 9630 / CIP 104966 / NBRC 100827 / IM2).